The primary structure comprises 88 residues: MIKNAFISLQEKKEESRGSVEFQVFSFTNKIRRLTSHLELHRKDYLSQRGLRKILGKRQRLLVYLSKKNRVRYKDLINKLNIRELKTR.

Belongs to the universal ribosomal protein uS15 family. Part of the 30S ribosomal subunit.

It is found in the plastid. It localises to the chloroplast. This Aethionema grandiflorum (Persian stone-cress) protein is Small ribosomal subunit protein uS15c (rps15).